Reading from the N-terminus, the 267-residue chain is MEVKIKQVEEVKISRYIIKETMEDWYQFVESDVVIVGAGPSGLSAAYYLAKAGLKTLVFERRLSFGGGIGGGAMLFHKLIIEKPADEILREVNVRLKEVEEGVYVVDSAEFMAKLATAAIDAGAKIIHGVTVDDVIFRENPLRVAGVAVEWTATQMASLHVDPIFISAKAVVDATGHDAEVISVAARKIPELGIVIPGEKSAYSERAEELTVINTGKVAEGLYAAGMAVTEVKGLPRMGPIFGAMVLSGKAVAEEITKDLLKSEIRT.

Residues S41, 60–61, G68, V132, and 160–162 contribute to the NAD(+) site; these read ER and HVD. D162 and H177 together coordinate Fe cation. NAD(+) is bound at residue M227. R237 serves as a coordination point for glycine.

Belongs to the THI4 family. In terms of assembly, homooctamer; tetramer of dimers. Fe(2+) serves as cofactor.

It carries out the reaction hydrogen sulfide + glycine + NAD(+) = ADP-5-ethyl-4-methylthiazole-2-carboxylate + nicotinamide + 3 H2O + H(+). It participates in cofactor biosynthesis; thiamine diphosphate biosynthesis. Functionally, involved in the biosynthesis of the thiazole moiety of thiamine. Catalyzes the conversion of NAD and glycine to adenosine diphosphate 5-(2-hydroxyethyl)-4-methylthiazole-2-carboxylate (ADT), an adenylated thiazole intermediate, using free sulfide as a source of sulfur. In Saccharolobus islandicus (strain M.14.25 / Kamchatka #1) (Sulfolobus islandicus), this protein is Thiamine thiazole synthase.